The sequence spans 492 residues: Beclin 1-associated autophagy-related key regulator (492 aa).

Ser29 bears the Phosphoserine mark. The stretch at 70–180 (RDRERFIDKK…KLGDLVEKKT (111 aa)) forms a coiled coil. Disordered regions lie at residues 213–232 (TSGR…MTSS) and 411–473 (GVAG…AGGM). Residues 222 to 232 (SSETDSAMTSS) are compositionally biased toward polar residues. Position 416 is a phosphoserine (Ser416). Over residues 424–433 (VSDEETDLGT) the composition is skewed to acidic residues. Thr429 is modified (phosphothreonine). A compositionally biased stretch (low complexity) spans 447–473 (PSQPVEVSQSQSTQASPPIASSSAGGM).

This sequence belongs to the ATG14 family. As to quaternary structure, forms homooligomers; homo-oligomerization is essential for the roles in membrane tethering and enhancement of SNARE-mediated fusion. Component of the PI3K (PI3KC3/PI3K-III/class III phosphatidylinositol 3-kinase) complex I (PI3KC3-C1) in which the core composed of the catalytic subunit PIK3C3, the regulatory subunit PIK3R4 and BECN1 is associated with ATG14. PI3KC3-C1 displays a V-shaped architecture with PIK3R4 serving as a bridge between PIK3C3 and the ATG14:BECN1 subcomplex. PI3KC3-C1 can associate with further regulatory subunits. Interacts with PIK3CB. Interacts (via coiled-coil domain) with BECN2 (via coiled-coil domain); this interaction is tighter than BECN2 self-association. Interacts with the STX17-SNAP29 binary t-SNARE complex. Interacts with NRBF2. Interacts with PIK3C3 and BECN1; this interaction is increased in the absence of TMEM39A. Interacts with STEEP1; the interaction is required for trafficking of STING1 from the endoplasmic reticulum. Interacts with ARMC3 (via ARM domains). Post-translationally, ubiquitinated via 'Lys-6', 'Lys-11' and 'Lys-63'-linked polyubiquitin chains on multiple lysines by MARCHF7, leading to ATG14 aggregation and loss of interaction with STX17.

Its subcellular location is the cytoplasm. It localises to the endoplasmic reticulum membrane. The protein resides in the preautophagosomal structure membrane. Functionally, required for both basal and inducible autophagy. Determines the localization of the autophagy-specific PI3-kinase complex. Plays a role in autophagosome formation and MAP1LC3/LC3 conjugation to phosphatidylethanolamine. Promotes BECN1 translocation from the trans-Golgi network to autophagosomes. Enhances PIK3C3 activity in a BECN1-dependent manner. Essential for the autophagy-dependent phosphorylation of BECN1. Stimulates the phosphorylation of BECN1, but suppresses the phosphorylation PIK3C3 by AMPK. Binds to STX17-SNAP29 binary t-SNARE complex on autophagosomes and primes it for VAMP8 interaction to promote autophagosome-endolysosome fusion. Modulates the hepatic lipid metabolism. The polypeptide is Beclin 1-associated autophagy-related key regulator (Rattus norvegicus (Rat)).